We begin with the raw amino-acid sequence, 341 residues long: MFAAQYIGNKSFNVVEGHAIAPQAGEVRLDVGYVGICGTDMHIYHGVMDQRVSIPQTIGHEISGVVAQIGEGVEGFTVGEKVVVRPLDWCGECPTCEAGLTHICQNLKFMGIDTPGAFQSSWTVKARTLHKLPAGVDLKQGALVEPLSVACHDVRRSRLKAGEKAVILGGGPIGQLVAAVAKSVGAEVLVSEPNDSRREFADELGVKSVNPMDTDLAAYVDQWTGTKGADVVFEVSGVLPAIQSMTQIAGRRGRIVMVAIHSTAPPIDLFQFFWKELELLGARVYEAADFDWAIELIASGQIDLKPFISSVSPLADIGSAFANMDGNPQGMKALVECNAEQ.

Cys-37 contributes to the Zn(2+) binding site. Catalysis depends on charge relay system residues Thr-39 and His-42. Zn(2+) is bound by residues His-60, Glu-61, Cys-90, Cys-93, Cys-96, and Cys-104.

Belongs to the zinc-containing alcohol dehydrogenase family. Requires Zn(2+) as cofactor.

It carries out the reaction 2-dehydro-3-deoxy-L-galactonate + NAD(+) = 3-deoxy-D-glycero-2,5-hexodiulosonate + NADH + H(+). Its function is as follows. Involved in the degradation of 3,6-anhydro-L-galactose, which is the major monomeric sugar of red macroalgae. Catalyzes the third step of the pathway, the NAD(+)-dependent oxidation of 2-dehydro-3-deoxy-L-galactonate (L-KDGal) to 3-deoxy-D-glycero-2,5-hexodiulosonate (L-DDGal). This Pseudoalteromonas atlantica (strain T6c / ATCC BAA-1087) protein is 2-dehydro-3-deoxy-L-galactonate 5-dehydrogenase.